Here is a 179-residue protein sequence, read N- to C-terminus: ATP-dependent protease subunit HslV (179 aa).

Residue T7 is part of the active site. Na(+) contacts are provided by A163, C166, and T169.

Belongs to the peptidase T1B family. HslV subfamily. As to quaternary structure, a double ring-shaped homohexamer of HslV is capped on each side by a ring-shaped HslU homohexamer. The assembly of the HslU/HslV complex is dependent on binding of ATP.

It is found in the cytoplasm. It carries out the reaction ATP-dependent cleavage of peptide bonds with broad specificity.. Allosterically activated by HslU binding. Its function is as follows. Protease subunit of a proteasome-like degradation complex believed to be a general protein degrading machinery. In Amoebophilus asiaticus (strain 5a2), this protein is ATP-dependent protease subunit HslV.